The primary structure comprises 228 residues: Phosphoenolpyruvate guanylyltransferase (228 aa).

Phosphoenolpyruvate-binding residues include threonine 148, glycine 164, and serine 167.

Belongs to the CofC family.

It catalyses the reaction phosphoenolpyruvate + GTP + H(+) = enolpyruvoyl-2-diphospho-5'-guanosine + diphosphate. The protein operates within cofactor biosynthesis; coenzyme F420 biosynthesis. In terms of biological role, guanylyltransferase that catalyzes the activation of phosphoenolpyruvate (PEP) as enolpyruvoyl-2-diphospho-5'-guanosine, via the condensation of PEP with GTP. It is involved in the biosynthesis of coenzyme F420, a hydride carrier cofactor. This Thermomonospora curvata (strain ATCC 19995 / DSM 43183 / JCM 3096 / KCTC 9072 / NBRC 15933 / NCIMB 10081 / Henssen B9) protein is Phosphoenolpyruvate guanylyltransferase.